Reading from the N-terminus, the 677-residue chain is Electrogenic aspartate/glutamate antiporter SLC25A12, mitochondrial (677 aa).

Alanine 2 carries the N-acetylalanine modification. The tract at residues 2 to 294 is regulatory N-terminal domain; it reads AVKVHTTKRG…TLADIERIAP (293 aa). The Mitochondrial intermembrane portion of the chain corresponds to 2 to 329; that stretch reads AVKVHTTKRG…WLQIAESAYR (328 aa). EF-hand domains lie at 40 to 85, 86 to 121, 122 to 156, and 157 to 192; these read VQRY…SVLC, APDS…TIIH, HHIP…FLQE, and LQLE…IRSH. 5 residues coordinate Ca(2+): aspartate 65, threonine 67, aspartate 69, leucine 71, and glutamate 76. Positions 295–310 are linker loop domain; that stretch reads LAEGALPYNLAELQRQ. Positions 320 to 612 are carrier domain; the sequence is WLQIAESAYR…RWFYIDFGGL (293 aa). Solcar repeat units lie at residues 324–416, 424–508, and 516–604; these read AESA…VRDK, IPLP…CKLL, and VGGI…LQRW. Residues 330-347 traverse the membrane as a helical segment; the sequence is FTLGSVAGAVGATAVYPI. At 348–390 the chain is on the mitochondrial matrix side; that stretch reads DLVKTRMQNQRGTGSVVGELMYKNSFDCFKKVLRYEGFFGLYR. The helical transmembrane segment at 391-410 threads the bilayer; it reads GLIPQLIGVAPEKAIKLTVN. Topologically, residues 411–433 are mitochondrial intermembrane; the sequence is DFVRDKFTKRDGSIPLPAEILAG. The helical transmembrane segment at 434 to 447 threads the bilayer; that stretch reads GCAGGSQVIFTNPL. Over 448–482 the chain is Mitochondrial matrix; the sequence is EIVKIRLQVAGEITTGPRVSALNVLQDLGLFGLYK. Residues 483 to 502 form a helical membrane-spanning segment; it reads GAKACFLRDIPFSAIYFPVY. At 503–521 the chain is on the mitochondrial intermembrane side; it reads AHCKLLLADENGRVGGINL. The chain crosses the membrane as a helical span at residues 522-539; sequence LTAGALAGVPAASLVTPA. Residues 540–578 lie on the Mitochondrial matrix side of the membrane; sequence DVIKTRLQVAARAGQTTYSGVVDCFRKILREEGPSAFWK. Residues 579–598 traverse the membrane as a helical segment; sequence GTAARVFRSSPQFGVTLVTY. Residues 599 to 677 are Mitochondrial intermembrane-facing; sequence ELLQRWFYID…AQPKAAAAAQ (79 aa). The segment at 613–677 is C-terminal domain; sequence KPSGSEPTPK…AQPKAAAAAQ (65 aa).

The protein belongs to the mitochondrial carrier (TC 2.A.29) family. In terms of assembly, homodimer (via N-terminus).

It localises to the mitochondrion inner membrane. The catalysed reaction is L-aspartate(in) + L-glutamate(out) + H(+)(out) = L-aspartate(out) + L-glutamate(in) + H(+)(in). It carries out the reaction 3-sulfino-L-alanine(out) + L-glutamate(in) + H(+)(in) = 3-sulfino-L-alanine(in) + L-glutamate(out) + H(+)(out). It catalyses the reaction 3-sulfino-L-alanine(out) + L-aspartate(in) = 3-sulfino-L-alanine(in) + L-aspartate(out). In terms of biological role, mitochondrial electrogenic aspartate/glutamate antiporter that favors efflux of aspartate and entry of glutamate and proton within the mitochondria as part of the malate-aspartate shuttle. Also mediates the uptake of L-cysteinesulfinate (3-sulfino-L-alanine) by mitochondria in exchange of L-glutamate and proton. Can also exchange L-cysteinesulfinate with aspartate in their anionic form without any proton translocation. Lacks transport activity towards L-glutamine or gamma-aminobutyric acid (GABA). This is Electrogenic aspartate/glutamate antiporter SLC25A12, mitochondrial from Mus musculus (Mouse).